The chain runs to 116 residues: uncharacterized protein (116 aa).

An N-terminal signal peptide occupies residues 1-15 (MKKYFLILASFMLVA).

This is an uncharacterized protein from Haemophilus influenzae (strain ATCC 51907 / DSM 11121 / KW20 / Rd).